The chain runs to 486 residues: Cysteine--tRNA ligase (486 aa).

A Zn(2+)-binding site is contributed by C29. Positions 31–41 match the 'HIGH' region motif; it reads VTVYDYCHLGH. Residues C214, H239, and E243 each coordinate Zn(2+). Residues 271 to 275 carry the 'KMSKS' region motif; it reads KMSKS. K274 is a binding site for ATP.

It belongs to the class-I aminoacyl-tRNA synthetase family. Monomer. It depends on Zn(2+) as a cofactor.

Its subcellular location is the cytoplasm. It carries out the reaction tRNA(Cys) + L-cysteine + ATP = L-cysteinyl-tRNA(Cys) + AMP + diphosphate. This Trichormus variabilis (strain ATCC 29413 / PCC 7937) (Anabaena variabilis) protein is Cysteine--tRNA ligase.